The primary structure comprises 448 residues: Methylenetetrahydrofolate--tRNA-(uracil-5-)-methyltransferase TrmFO (448 aa).

13–18 (GAGLAG) contacts FAD.

It belongs to the MnmG family. TrmFO subfamily. FAD is required as a cofactor.

It localises to the cytoplasm. It carries out the reaction uridine(54) in tRNA + (6R)-5,10-methylene-5,6,7,8-tetrahydrofolate + NADH + H(+) = 5-methyluridine(54) in tRNA + (6S)-5,6,7,8-tetrahydrofolate + NAD(+). It catalyses the reaction uridine(54) in tRNA + (6R)-5,10-methylene-5,6,7,8-tetrahydrofolate + NADPH + H(+) = 5-methyluridine(54) in tRNA + (6S)-5,6,7,8-tetrahydrofolate + NADP(+). Functionally, catalyzes the folate-dependent formation of 5-methyl-uridine at position 54 (M-5-U54) in all tRNAs. The chain is Methylenetetrahydrofolate--tRNA-(uracil-5-)-methyltransferase TrmFO from Streptococcus pyogenes serotype M12 (strain MGAS2096).